A 64-amino-acid chain; its full sequence is Conotoxin Im11.4 (64 aa).

The first 26 residues, 1–26 (MMFRLTSVSCILLVIAFLNLVGLTNA), serve as a signal peptide directing secretion. 4 disulfides stabilise this stretch: Cys27-Cys41, Cys34-Cys46, Cys40-Cys50, and Cys45-Cys54. Histidine amide is present on His57. The propeptide occupies 61-64 (ATFQ).

Belongs to the conotoxin I2 superfamily. Expressed by the venom duct.

The protein localises to the secreted. In Conus imperialis (Imperial cone), this protein is Conotoxin Im11.4.